Here is a 428-residue protein sequence, read N- to C-terminus: Dihydroorotase (428 aa).

Zn(2+) contacts are provided by His-61 and His-63. Substrate is bound by residues His-63 to Arg-65 and Asn-95. The Zn(2+) site is built by Asp-153, His-180, and His-233. Asn-279 serves as a coordination point for substrate. Asp-306 serves as a coordination point for Zn(2+). The active site involves Asp-306. Residues His-310 and Phe-324 to Gly-325 each bind substrate.

The protein belongs to the metallo-dependent hydrolases superfamily. DHOase family. Class I DHOase subfamily. Zn(2+) serves as cofactor.

The catalysed reaction is (S)-dihydroorotate + H2O = N-carbamoyl-L-aspartate + H(+). The protein operates within pyrimidine metabolism; UMP biosynthesis via de novo pathway; (S)-dihydroorotate from bicarbonate: step 3/3. Functionally, catalyzes the reversible cyclization of carbamoyl aspartate to dihydroorotate. This Geobacillus kaustophilus (strain HTA426) protein is Dihydroorotase.